The sequence spans 139 residues: Putative pre-16S rRNA nuclease (139 aa).

This sequence belongs to the YqgF nuclease family.

It localises to the cytoplasm. Functionally, could be a nuclease involved in processing of the 5'-end of pre-16S rRNA. This Streptococcus pneumoniae serotype 19F (strain G54) protein is Putative pre-16S rRNA nuclease.